Consider the following 69-residue polypeptide: DNA gyrase inhibitor YacG (69 aa).

The segment covering 1 to 15 (MSDEPEHTAKVEPLR) has biased composition (basic and acidic residues). Residues 1–22 (MSDEPEHTAKVEPLRKPLPCPE) form a disordered region. Residues C20, C23, C35, and C39 each coordinate Zn(2+).

This sequence belongs to the DNA gyrase inhibitor YacG family. As to quaternary structure, interacts with GyrB. Requires Zn(2+) as cofactor.

Functionally, inhibits all the catalytic activities of DNA gyrase by preventing its interaction with DNA. Acts by binding directly to the C-terminal domain of GyrB, which probably disrupts DNA binding by the gyrase. The polypeptide is DNA gyrase inhibitor YacG (Allorhizobium ampelinum (strain ATCC BAA-846 / DSM 112012 / S4) (Agrobacterium vitis (strain S4))).